The chain runs to 400 residues: F-box/kelch-repeat protein At4g19870 (400 aa).

Over residues 1–10 (MKRQAKPPEK) the composition is skewed to basic and acidic residues. A disordered region spans residues 1–33 (MKRQAKPPEKKTKRTTNASSPTPSSSSPSLSSL). Positions 19–33 (SSPTPSSSSPSLSSL) are enriched in low complexity. Residues 27-73 (SPSLSSLPDEIVENCLARISRSYYPTLSIVSKSFRSIISSTELYVAR) form the F-box domain. 3 Kelch repeats span residues 146 to 192 (EIYV…LYDG), 194 to 240 (IYVI…RIAE), and 242 to 284 (EGKI…SVLY).

The polypeptide is F-box/kelch-repeat protein At4g19870 (Arabidopsis thaliana (Mouse-ear cress)).